Here is a 387-residue protein sequence, read N- to C-terminus: MARVIHTGDTHLGYQQYHAPQRRQDFLDAFDAVITDAIDEGVDAVVHAGDLYHDRQPGLRDILDTIALLRPLQDADIPFLAVVGNHEGTRDAQWLDLFETLGLAERLDDSPRVVADTAFYGLDYVPQSKRDDHDYTVADHDADHAALVSHGLFTPFPYANWDLDAVLADATVEFDAVLLGDNHTPDTAQLGDTWVTYCGSTERASASERDPRGYNIVSFSSDATTDVAISRKSLNTREFVFVDADLGPTDGTAFIQERLRERALDDAVVVVTITGDGDTVTPAEIERFGDDRGALLTRVNDRREFDTGDDAPDVDVSFADPDDAVEQRVRDLGLDEPARDVDRIVRDDTLADAAVRERVIQRAEAVLDDDADAADDDGRPTTVEEFQ.

Positions 9, 11, 50, and 85 each coordinate Mn(2+). His86 functions as the Proton donor in the catalytic mechanism. Mn(2+)-binding residues include His150, Asp181, and His183. Positions 365-387 (AVLDDDADAADDDGRPTTVEEFQ) are disordered. The segment covering 366-375 (VLDDDADAAD) has biased composition (acidic residues).

This sequence belongs to the MRE11/RAD32 family. In terms of assembly, homodimer. Forms a heterotetramer composed of two Mre11 subunits and two Rad50 subunits. The cofactor is Mn(2+).

Nuclease activity is regulated by Rad50. In terms of biological role, part of the Rad50/Mre11 complex, which is involved in the early steps of DNA double-strand break (DSB) repair. Mre11 binds to DSB ends and has both double-stranded 3'-5' exonuclease activity and single-stranded endonuclease activity. The polypeptide is DNA double-strand break repair protein Mre11 (Halobacterium salinarum (strain ATCC 700922 / JCM 11081 / NRC-1) (Halobacterium halobium)).